The chain runs to 198 residues: Armadillo repeat-containing protein 7 (198 aa).

ARM repeat units follow at residues 57-99 (QVLD…HAGG) and 100-140 (VPLI…TATP). A Phosphoserine modification is found at serine 169.

In terms of assembly, component of the minor spliceosome. Within this complex, interacts with RBM48.

As a component of the minor spliceosome, involved in the splicing of U12-type introns in pre-mRNAs. This is Armadillo repeat-containing protein 7 (ARMC7) from Homo sapiens (Human).